Reading from the N-terminus, the 518-residue chain is Centromere protein T (518 aa).

The segment at 1–70 (MADLSSPDGD…RKHSHGTGSV (70 aa)) is disordered. Positions 19–28 (HVLDTADSHT) are enriched in basic and acidic residues. The segment covering 34–57 (STQTNPQRRRSQTPYSKRQGSQRK) has biased composition (polar residues). Residue Thr-86 is modified to Phosphothreonine. The flexible stalk domain stretch occupies residues 94–381 (ILLTAPESST…EPHQLFEPPP (288 aa)). Disordered regions lie at residues 102–156 (STVM…KRKQ), 271–362 (VHHS…ELSS), and 375–412 (QLFEPPPSPGVAAVSSESVPAKLPSRTRTAQPRHHQDP). Positions 294 to 306 (TPSTGTRPQSQMS) are enriched in polar residues. Ser-313, Ser-324, Ser-333, Ser-345, Ser-346, Ser-357, and Ser-382 each carry phosphoserine. Residues 326–343 (ELREAVGSKEAEEPKDLE) show a composition bias toward basic and acidic residues. Residues 384 to 395 (GVAAVSSESVPA) are compositionally biased toward low complexity.

It belongs to the CENP-T/CNN1 family. Component of the CENPA-CAD complex, composed of CENPI, CENPK, CENPL, CENPO, CENPP, CENPQ, CENPR and CENPS. The CENPA-CAD complex is probably recruited on centromeres by the CENPA-NAC complex, at least composed of CENPA, CENPC, CENPH, CENPM, CENPN, CENPT and CENPU. Identified in a centromeric complex containing histones H2A, H2B, H3 and H4, and at least CENPA, CENPB, CENPC, CENPT, CENPN, HJURP, SUPT16H, SSRP1 and RSF1. Interacts (via N-terminus) with the NDC80 complex. Heterodimer with CENPW; this dimer coassembles with CENPS-CENPX heterodimers at centromeres to form the tetrameric CENP-T-W-S-X complex. In terms of processing, dynamically phosphorylated during the cell cycle. Phosphorylated during G2 phase, metaphase and anaphase, but not during telophase or G1 phase.

Its subcellular location is the nucleus. The protein resides in the chromosome. It localises to the centromere. It is found in the kinetochore. Its function is as follows. Component of the CENPA-NAC (nucleosome-associated) complex, a complex that plays a central role in assembly of kinetochore proteins, mitotic progression and chromosome segregation. The CENPA-NAC complex recruits the CENPA-CAD (nucleosome distal) complex and may be involved in incorporation of newly synthesized CENPA into centromeres. Part of a nucleosome-associated complex that binds specifically to histone H3-containing nucleosomes at the centromere, as opposed to nucleosomes containing CENPA. Component of the heterotetrameric CENP-T-W-S-X complex that binds and supercoils DNA, and plays an important role in kinetochore assembly. CENPT has a fundamental role in kinetochore assembly and function. It is one of the inner kinetochore proteins, with most further proteins binding downstream. Required for normal chromosome organization and normal progress through mitosis. The protein is Centromere protein T (Cenpt) of Rattus norvegicus (Rat).